We begin with the raw amino-acid sequence, 766 residues long: DENN domain-containing protein 1B (766 aa).

The 130-residue stretch at 14-143 folds into the uDENN domain; sequence DLVLKVKCHA…YNHPVPKANT (130 aa). In terms of domain architecture, cDENN spans 160–296; it reads GLPTIPESRN…VVSALKNKLK (137 aa). The 78-residue stretch at 298–375 folds into the dDENN domain; that stretch reads QSTATGDGVA…DGRLAKLNAG (78 aa). Residues 378–382 carry the FXDXF motif motif; it reads FSDIF. The segment at 472–523 is disordered; the sequence is NEKGENREKHKLSQTHLKRPHKSLDGTLYDDDDDDDDIERASKISSEDGEET. The segment covering 480 to 492 has biased composition (basic residues); it reads KHKLSQTHLKRPH. A compositionally biased stretch (acidic residues) spans 499–509; sequence LYDDDDDDDDI. Y500 bears the Phosphotyrosine mark. Phosphoserine is present on residues S516, S517, S530, and S533. The short motif at 547-556 is the Clathrin box element; the sequence is DLLGEILDTL. 2 disordered regions span residues 611-634 and 652-732; these read LGQD…VSSG and LCAD…KPSK. Phosphoserine occurs at positions 632 and 633. A compositionally biased stretch (polar residues) spans 694-704; the sequence is TPGQAPLQSED. The segment covering 722 to 732 has biased composition (basic and acidic residues); the sequence is KAGKEDTKPSK.

In terms of assembly, interacts with RAB35. Interacts with clathrin heavy chain/CLTC. Interacts with components of the adapter protein complex 2 (AP-2) AP2A2 and AP2B1. Interacts with CD3E. Phosphorylated on serine and/or threonine, possibly regulating the guanine nucleotide exchange factor (GEF) activity. In terms of tissue distribution, expressed in a subset of dendritic cells (DCs).

It is found in the cytoplasm. Its subcellular location is the cytosol. The protein localises to the cytoplasmic vesicle. It localises to the clathrin-coated vesicle. Guanine nucleotide exchange factor (GEF) for RAB35 that acts as a regulator of T-cell receptor (TCR) internalization in TH2 cells. Acts by promoting the exchange of GDP to GTP, converting inactive GDP-bound RAB35 into its active GTP-bound form. Plays a role in clathrin-mediated endocytosis. Controls cytokine production in TH2 lymphocytes by controlling the rate of TCR internalization and routing to endosomes: acts by mediating clathrin-mediated endocytosis of TCR via its interaction with the adapter protein complex 2 (AP-2) and GEF activity. Dysregulation leads to impaired TCR down-modulation and recycling, affecting cytokine production in TH2 cells. The protein is DENN domain-containing protein 1B of Mus musculus (Mouse).